The following is a 349-amino-acid chain: MAELLAIKWDDNRDKLILLDQTILPNKIEYIEYDTAEGVYDSIKDMIVRGAPAIGVTAAYGLYFAAKVAPEDNFENFFKYLKEKSSYLDSSRPTAVNLSWALKVMESKALENKDKDVKEIKSILREEAKRIHEEDIEICKAIGENLITLLKDGVGILTHCNAGQLATSKYGTATSPMYLAKEKGWNFKVYSDETRPRLQGSTLTALELYEAGIDVTTITDNMAAMVMSQGKIDAVIVGCDRIAANGDTANKIGTMGVSILAKYFGIPMYIAAPTPSIDMNTKTGKDIPIEERNSEEITSRFGVWTAPKGVKVYNPGFDVTPHENITAIVTEKGIVYPPFKENLKKLFEK.

Residues 49–51, arginine 92, and glutamine 199 each bind substrate; that span reads RGA. Aspartate 240 functions as the Proton donor in the catalytic mechanism. 250-251 is a binding site for substrate; sequence NK.

This sequence belongs to the EIF-2B alpha/beta/delta subunits family. DrdI subfamily.

It carries out the reaction 5-deoxy-alpha-D-ribose 1-phosphate = 5-deoxy-D-ribulose 1-phosphate. Its pathway is carbohydrate degradation. In terms of biological role, catalyzes the isomerization of 5-deoxy-alpha-D-ribose 1-phosphate to 5-deoxy-D-ribulose 1-phosphate, as part of a 5-deoxyribose salvage pathway that recycles this toxic radical SAM enzyme by-product to mainstream metabolites. The polypeptide is 5-deoxyribose 1-phosphate isomerase (Clostridium botulinum (strain Kyoto / Type A2)).